The chain runs to 297 residues: Glycine--tRNA ligase alpha subunit (297 aa).

Belongs to the class-II aminoacyl-tRNA synthetase family. Tetramer of two alpha and two beta subunits.

The protein localises to the cytoplasm. The enzyme catalyses tRNA(Gly) + glycine + ATP = glycyl-tRNA(Gly) + AMP + diphosphate. This is Glycine--tRNA ligase alpha subunit from Sulfurihydrogenibium sp. (strain YO3AOP1).